Consider the following 324-residue polypeptide: NAD(P)H-dependent D-xylose reductase XYR1 (324 aa).

Catalysis depends on Tyr-50, which acts as the Proton donor. His-112 is a binding site for substrate. Residues 168 to 169, 217 to 226, and 273 to 283 contribute to the NAD(+) site; these read SN, SSFGPASFKE, and KSSREKTMKSN.

The protein belongs to the aldo/keto reductase family.

It catalyses the reaction xylitol + NAD(+) = D-xylose + NADH + H(+). The catalysed reaction is xylitol + NADP(+) = D-xylose + NADPH + H(+). It participates in carbohydrate metabolism; D-xylose degradation. Its function is as follows. Catalyzes the initial reaction in the xylose utilization pathway by reducing D-xylose into xylitol. Xylose is a major component of hemicelluloses such as xylan. Most fungi utilize D-xylose via three enzymatic reactions, xylose reductase (XR), xylitol dehydrogenase (XDH), and xylulokinase, to form xylulose 5-phosphate, which enters pentose phosphate pathway. The chain is NAD(P)H-dependent D-xylose reductase XYR1 (XYR1) from Pyricularia oryzae (strain 70-15 / ATCC MYA-4617 / FGSC 8958) (Rice blast fungus).